Reading from the N-terminus, the 237-residue chain is Protein GrpE (237 aa).

2 disordered regions span residues Glu27 to Thr51 and Ala202 to Ser237. Low complexity-rich tracts occupy residues Ala33–Ser45 and Ser204–Ser213. The span at Thr227–Ser237 shows a compositional bias: polar residues.

The protein belongs to the GrpE family. In terms of assembly, homodimer.

The protein resides in the cytoplasm. In terms of biological role, participates actively in the response to hyperosmotic and heat shock by preventing the aggregation of stress-denatured proteins, in association with DnaK and GrpE. It is the nucleotide exchange factor for DnaK and may function as a thermosensor. Unfolded proteins bind initially to DnaJ; upon interaction with the DnaJ-bound protein, DnaK hydrolyzes its bound ATP, resulting in the formation of a stable complex. GrpE releases ADP from DnaK; ATP binding to DnaK triggers the release of the substrate protein, thus completing the reaction cycle. Several rounds of ATP-dependent interactions between DnaJ, DnaK and GrpE are required for fully efficient folding. This chain is Protein GrpE, found in Synechococcus sp. (strain JA-3-3Ab) (Cyanobacteria bacterium Yellowstone A-Prime).